The primary structure comprises 262 residues: Tethering factor for nuclear proteasome cut8 (262 aa).

The protein belongs to the cut8/STS1 family. In terms of assembly, binds the proteasome. The N-terminal part (residues 1 to 72) is polyubiquitinated by rhp6, which is required for the interaction with the proteasome.

It localises to the nucleus envelope. Its function is as follows. Together with nucleoporin alm1, tethers the proteasome to the nuclear envelope. Involved in ubiquitin-mediated protein degradation and facilitates the degradation of nuclear proteins like mitotic cyclin and cut2. Required for normal progression of anaphase. This Schizosaccharomyces pombe (strain 972 / ATCC 24843) (Fission yeast) protein is Tethering factor for nuclear proteasome cut8.